Reading from the N-terminus, the 154-residue chain is Superoxide dismutase [Cu-Zn] (154 aa).

Cu cation contacts are provided by H47 and H64. Residues C58 and C147 are joined by a disulfide bond. Zn(2+) is bound by residues H64, H72, H81, and D84. Residue H121 coordinates Cu cation. R144 contributes to the substrate binding site.

This sequence belongs to the Cu-Zn superoxide dismutase family. Homodimer. It depends on Cu cation as a cofactor. The cofactor is Zn(2+).

Its subcellular location is the cytoplasm. The enzyme catalyses 2 superoxide + 2 H(+) = H2O2 + O2. Destroys radicals which are normally produced within the cells and which are toxic to biological systems. The polypeptide is Superoxide dismutase [Cu-Zn] (SOD1) (Pleurocordyceps sinensis (Polycephalomyces sinensis)).